Reading from the N-terminus, the 317-residue chain is Melanocyte-stimulating hormone receptor (317 aa).

At 1-37 (MPAQGSQRSLLGSLNSTLMATSSLGLSANQSGPQCLE) the chain is on the extracellular side. Residues N15 and N29 are each glycosylated (N-linked (GlcNAc...) asparagine). A helical transmembrane segment spans residues 38-63 (VSVPDGLFLCLGLVSLVENMLVVAAI). Residues 64–72 (AKNRNLHSP) are Cytoplasmic-facing. The helical transmembrane segment at 73 to 93 (MYCFICCLALSDLLVSVSNVL) threads the bilayer. Residues 94–118 (ETAVMLLLEAGALAAQATVVQQLDN) lie on the Extracellular side of the membrane. Residues 119–140 (IIDVLVCSSMVSSLCFLGAIAM) traverse the membrane as a helical segment. The Cytoplasmic segment spans residues 141 to 163 (DRYISIFYALRYHSIVTLSRAQW). A helical membrane pass occupies residues 164-183 (ATAAVWAAGILSSTLFIAYY). Residues 184–191 (DHTAVLLC) lie on the Extracellular side of the membrane. The chain crosses the membrane as a helical span at residues 192-211 (LVVFFLAMLVLMAVLYAHML). Residues 212-240 (TQACQHVQGITRLHKRQHLVQQGFGLKGA) are Cytoplasmic-facing. A helical membrane pass occupies residues 241–266 (ATLTILLGVFLLCWGPFFLHLTLIAV). Topologically, residues 267-279 (CPQHPTCSCVFKN) are extracellular. The chain crosses the membrane as a helical span at residues 280–300 (FKLFLALIICNAIVDPLIYAF). Residues 301–317 (RXQELRKTLKEVLLFSW) are Cytoplasmic-facing.

It belongs to the G-protein coupled receptor 1 family. As to quaternary structure, interacts with MGRN1, but does not undergo MGRN1-mediated ubiquitination; this interaction competes with GNAS-binding and thus inhibits agonist-induced cAMP production. Interacts with OPN3; the interaction results in a decrease in MC1R-mediated cAMP signaling and ultimately a decrease in melanin production in melanocytes.

It is found in the cell membrane. Receptor for MSH (alpha, beta and gamma) and ACTH. The activity of this receptor is mediated by G proteins which activate adenylate cyclase. Mediates melanogenesis, the production of eumelanin (black/brown) and phaeomelanin (red/yellow), via regulation of cAMP signaling in melanocytes. This chain is Melanocyte-stimulating hormone receptor (MC1R), found in Loris tardigradus (Slender loris).